Here is a 422-residue protein sequence, read N- to C-terminus: 3-phosphoshikimate 1-carboxyvinyltransferase (422 aa).

Residues Lys20, Ser21, and Arg25 each contribute to the 3-phosphoshikimate site. Lys20 is a binding site for phosphoenolpyruvate. 2 residues coordinate phosphoenolpyruvate: Gly90 and Arg118. 6 residues coordinate 3-phosphoshikimate: Ser163, Ser164, Gln165, Ser191, Asp306, and Lys333. Residue Gln165 participates in phosphoenolpyruvate binding. The active-site Proton acceptor is the Asp306. 2 residues coordinate phosphoenolpyruvate: Arg337 and Arg378.

This sequence belongs to the EPSP synthase family. In terms of assembly, monomer.

The protein localises to the cytoplasm. It catalyses the reaction 3-phosphoshikimate + phosphoenolpyruvate = 5-O-(1-carboxyvinyl)-3-phosphoshikimate + phosphate. Its pathway is metabolic intermediate biosynthesis; chorismate biosynthesis. Functionally, catalyzes the transfer of the enolpyruvyl moiety of phosphoenolpyruvate (PEP) to the 5-hydroxyl of shikimate-3-phosphate (S3P) to produce enolpyruvyl shikimate-3-phosphate and inorganic phosphate. The polypeptide is 3-phosphoshikimate 1-carboxyvinyltransferase (Methanocella arvoryzae (strain DSM 22066 / NBRC 105507 / MRE50)).